We begin with the raw amino-acid sequence, 389 residues long: Succinate--CoA ligase [ADP-forming] subunit beta (389 aa).

The 228-residue stretch at 9-236 (RDLFEKHGVP…KTTADPLEEK (228 aa)) folds into the ATP-grasp domain. Residues lysine 45, 52–54 (GRG), alanine 94, and glutamate 99 contribute to the ATP site. Residues asparagine 191 and aspartate 205 each contribute to the Mg(2+) site. Residues asparagine 256 and 318 to 320 (GIT) contribute to the substrate site.

Belongs to the succinate/malate CoA ligase beta subunit family. As to quaternary structure, heterotetramer of two alpha and two beta subunits. It depends on Mg(2+) as a cofactor.

It catalyses the reaction succinate + ATP + CoA = succinyl-CoA + ADP + phosphate. The enzyme catalyses GTP + succinate + CoA = succinyl-CoA + GDP + phosphate. Its pathway is carbohydrate metabolism; tricarboxylic acid cycle; succinate from succinyl-CoA (ligase route): step 1/1. Functionally, succinyl-CoA synthetase functions in the citric acid cycle (TCA), coupling the hydrolysis of succinyl-CoA to the synthesis of either ATP or GTP and thus represents the only step of substrate-level phosphorylation in the TCA. The beta subunit provides nucleotide specificity of the enzyme and binds the substrate succinate, while the binding sites for coenzyme A and phosphate are found in the alpha subunit. This is Succinate--CoA ligase [ADP-forming] subunit beta from Kocuria rhizophila (strain ATCC 9341 / DSM 348 / NBRC 103217 / DC2201).